Reading from the N-terminus, the 113-residue chain is Large ribosomal subunit protein bL19 (113 aa).

It belongs to the bacterial ribosomal protein bL19 family.

This protein is located at the 30S-50S ribosomal subunit interface and may play a role in the structure and function of the aminoacyl-tRNA binding site. In Corynebacterium jeikeium (strain K411), this protein is Large ribosomal subunit protein bL19.